Here is a 357-residue protein sequence, read N- to C-terminus: Phosphate acyltransferase (357 aa).

This sequence belongs to the PlsX family. As to quaternary structure, homodimer. Probably interacts with PlsY.

It is found in the cytoplasm. The catalysed reaction is a fatty acyl-[ACP] + phosphate = an acyl phosphate + holo-[ACP]. Its pathway is lipid metabolism; phospholipid metabolism. Functionally, catalyzes the reversible formation of acyl-phosphate (acyl-PO(4)) from acyl-[acyl-carrier-protein] (acyl-ACP). This enzyme utilizes acyl-ACP as fatty acyl donor, but not acyl-CoA. This chain is Phosphate acyltransferase, found in Herminiimonas arsenicoxydans.